The following is a 349-amino-acid chain: Putative transport protein YhhT (349 aa).

Over 1-10 (METPQPDKTG) the chain is Cytoplasmic. Residues 11–31 (MHILLKLASLVVILAGIHAAA) traverse the membrane as a helical segment. Residue aspartate 32 is a topological domain, periplasmic. A helical transmembrane segment spans residues 33 to 53 (IIVQLLLALFFAIVLNPLVTW). Residues 54-62 (FIRRGVQRP) are Cytoplasmic-facing. The helical transmembrane segment at 63–83 (VAITIVVVVMLIALTALVGVL) threads the bilayer. Over 84 to 142 (AASFNEFISMLPKFNKELTRKLFKLQEMLPFLNLHMSPERMLQRMDSEKVVTFTTALMT) the chain is Periplasmic. A helical transmembrane segment spans residues 143-163 (GLSGAMASVLLLVMTVVFMLF). The Cytoplasmic portion of the chain corresponds to 164–208 (EVRHVPYKMRFALNNPQIHIAGLHRALKGVSHYLALKTLLSLWTG). The chain crosses the membrane as a helical span at residues 209–229 (VIVWLGLELMGVQFALMWAVL). At 230–234 (AFLLN) the chain is on the periplasmic side. A helical membrane pass occupies residues 235–255 (YVPNIGAVISAVPPMIQVLLF). Over 256 to 257 (NG) the chain is Cytoplasmic. The helical transmembrane segment at 258-278 (VYECILVGALFLVVHMVIGNI) threads the bilayer. Residues 279–292 (LEPRMMGHRLGMST) are Periplasmic-facing. Residues 293–313 (MVVFLSLLIWGWLLGPVGMLL) traverse the membrane as a helical segment. The Cytoplasmic segment spans residues 314–349 (SVPLTSVCKIWMETTKGGSKLAILLGPGRPKSRLPG).

It belongs to the autoinducer-2 exporter (AI-2E) (TC 2.A.86) family.

Its subcellular location is the cell inner membrane. The chain is Putative transport protein YhhT (yhhT) from Escherichia coli O157:H7.